The chain runs to 188 residues: MIDKEKIKKAVRDILEAIGEDPDREGLLETPDRVARMYEEIFAGLHTDVKDVIKIFQEDEHQEIILVKDIPLYSMCEHHLLPFIGVAHVAYLPRKGRILGLSKLARIVDILAKRPQLQERLTSEIADTIMEAVNPLGVAVVIEAEHLCMTMRGIKKPGAKTVTSALRGIFRTDEKSRAEVMSLINSKK.

Cysteine 76, histidine 79, and cysteine 148 together coordinate Zn(2+).

This sequence belongs to the GTP cyclohydrolase I family. As to quaternary structure, homomer.

It carries out the reaction GTP + H2O = 7,8-dihydroneopterin 3'-triphosphate + formate + H(+). It participates in cofactor biosynthesis; 7,8-dihydroneopterin triphosphate biosynthesis; 7,8-dihydroneopterin triphosphate from GTP: step 1/1. The chain is GTP cyclohydrolase 1 from Thermoanaerobacter pseudethanolicus (strain ATCC 33223 / 39E) (Clostridium thermohydrosulfuricum).